A 253-amino-acid polypeptide reads, in one-letter code: DNA polymerase sliding clamp (253 aa).

Belongs to the PCNA family. As to quaternary structure, homotrimer. The subunits circularize to form a toroid; DNA passes through its center. Replication factor C (RFC) is required to load the toroid on the DNA.

Its function is as follows. Sliding clamp subunit that acts as a moving platform for DNA processing. Responsible for tethering the catalytic subunit of DNA polymerase and other proteins to DNA during high-speed replication. The sequence is that of DNA polymerase sliding clamp from Methanopyrus kandleri (strain AV19 / DSM 6324 / JCM 9639 / NBRC 100938).